We begin with the raw amino-acid sequence, 226 residues long: ATP synthase F(0) complex subunit a (226 aa).

A run of 6 helical transmembrane segments spans residues 12–32 (PTIL…LLIP), 68–88 (WSLM…LGLL), 97–117 (QLSM…ATGF), 138–158 (IPML…ALAV), 164–184 (ITAG…LSTI), and 200–222 (TTLE…SLYL).

It belongs to the ATPase A chain family. Component of the ATP synthase complex composed at least of ATP5F1A/subunit alpha, ATP5F1B/subunit beta, ATP5MC1/subunit c (homooctomer), MT-ATP6/subunit a, MT-ATP8/subunit 8, ATP5ME/subunit e, ATP5MF/subunit f, ATP5MG/subunit g, ATP5MK/subunit k, ATP5MJ/subunit j, ATP5F1C/subunit gamma, ATP5F1D/subunit delta, ATP5F1E/subunit epsilon, ATP5PF/subunit F6, ATP5PB/subunit b, ATP5PD/subunit d, ATP5PO/subunit OSCP. ATP synthase complex consists of a soluble F(1) head domain (subunits alpha(3) and beta(3)) - the catalytic core - and a membrane F(0) domain - the membrane proton channel (subunits c, a, 8, e, f, g, k and j). These two domains are linked by a central stalk (subunits gamma, delta, and epsilon) rotating inside the F1 region and a stationary peripheral stalk (subunits F6, b, d, and OSCP). Interacts with DNAJC30; interaction is direct.

It is found in the mitochondrion inner membrane. The enzyme catalyses H(+)(in) = H(+)(out). Subunit a, of the mitochondrial membrane ATP synthase complex (F(1)F(0) ATP synthase or Complex V) that produces ATP from ADP in the presence of a proton gradient across the membrane which is generated by electron transport complexes of the respiratory chain. ATP synthase complex consist of a soluble F(1) head domain - the catalytic core - and a membrane F(1) domain - the membrane proton channel. These two domains are linked by a central stalk rotating inside the F(1) region and a stationary peripheral stalk. During catalysis, ATP synthesis in the catalytic domain of F(1) is coupled via a rotary mechanism of the central stalk subunits to proton translocation. With the subunit c (ATP5MC1), forms the proton-conducting channel in the F(0) domain, that contains two crucial half-channels (inlet and outlet) that facilitate proton movement from the mitochondrial intermembrane space (IMS) into the matrix. Protons are taken up via the inlet half-channel and released through the outlet half-channel, following a Grotthuss mechanism. This is ATP synthase F(0) complex subunit a from Hylobates lar (Lar gibbon).